A 748-amino-acid polypeptide reads, in one-letter code: Transcription factor hmgR (748 aa).

Residues 24–59 constitute a DNA-binding region (zn(2)-C6 fungal-type); sequence CISCRQRKAKCDLGTGPDGLPLGPPCAKCRREQKPC. Disordered regions lie at residues 108–142 and 661–683; these read SQED…QIDL and REST…DEHA.

It is found in the nucleus. Functionally, transcription factor; part of the L-tyrosine degradation gene cluster that mediates the biosynthesis of the brownish pigment pyomelanin as an alternative melanin. Acts as a transcriptional activator for the genes of the tyrosine degradation cluster. This chain is Transcription factor hmgR, found in Aspergillus fumigatus (strain ATCC MYA-4609 / CBS 101355 / FGSC A1100 / Af293) (Neosartorya fumigata).